A 367-amino-acid polypeptide reads, in one-letter code: MDCKYLKECGSCTLFTSYSEQISFKTDLIKQNFSHFYDGKFDLFSSSPKHYRTRAEFGIWHEGSKLSYTMHASEKGKKVFIDECPKVCEQISHLMPRLLESLQDDEILRTKLFGVEFIACKSGTLVTLLYHKKLDSEFEAAMKILASKLDVMILARSRGQKLLSGELNLVDELNVDGQIYKFSLSENAFIQPNKAVNEKMIAWAKECVQSGADLLELYCGHGNFTIPLSFKFKNVLATEISKSSIANALKNCELNGVENIKFLRMDADELMSAFAGVREFNRLKDIKLSDFNFSHVLVDPPRAGLSESVINFIRNFKNIIYISCNPETLKENLNELTKSHKVIKFALFDQFANTHHIECGVLLEAKR.

The S-adenosyl-L-methionine site is built by Q191, Y218, N223, E239, and D299. C324 (nucleophile) is an active-site residue. E358 functions as the Proton acceptor in the catalytic mechanism.

This sequence belongs to the class I-like SAM-binding methyltransferase superfamily. RNA M5U methyltransferase family. TrmA subfamily.

It catalyses the reaction uridine(54) in tRNA + S-adenosyl-L-methionine = 5-methyluridine(54) in tRNA + S-adenosyl-L-homocysteine + H(+). The enzyme catalyses uridine(341) in tmRNA + S-adenosyl-L-methionine = 5-methyluridine(341) in tmRNA + S-adenosyl-L-homocysteine + H(+). Functionally, dual-specificity methyltransferase that catalyzes the formation of 5-methyluridine at position 54 (m5U54) in all tRNAs, and that of position 341 (m5U341) in tmRNA (transfer-mRNA). This Campylobacter concisus (strain 13826) protein is tRNA/tmRNA (uracil-C(5))-methyltransferase.